A 316-amino-acid polypeptide reads, in one-letter code: MTRDELKTTKIGVLMGGLSAEREVSLASGGAVLKALQSRGYDAVPVDVGRDLPQVLVREWIDVAFICLHGRYGEDGTVQGLLELMGIPYTGSGVLASALAMNKIVAKEVFAARGLTIAPYRVVRRGETVDPVAEGFGYPVVVKPSQEGSSVGVSIVKSPEELPSALELAFRYDDDILVERFIKGREIQIGILDDRAMGAIEIVPVNEFYDFEAKYTAGKAEHICPPVLPAELHRRLLAEGEAAHRALGCSGYSRVDFLVTEGGECYLLEVNTLPGMTALSLLPEIALKESGIGFEDLVERILISAELKIKGEGAGS.

One can recognise an ATP-grasp domain in the interval 107–303 (KEVFAARGLT…FEDLVERILI (197 aa)). Residue 133-188 (AEGFGYPVVVKPSQEGSSVGVSIVKSPEELPSALELAFRYDDDILVERFIKGREIQ) coordinates ATP. The Mg(2+) site is built by aspartate 256, glutamate 269, and asparagine 271.

The protein belongs to the D-alanine--D-alanine ligase family. Requires Mg(2+) as cofactor. The cofactor is Mn(2+).

The protein localises to the cytoplasm. The catalysed reaction is 2 D-alanine + ATP = D-alanyl-D-alanine + ADP + phosphate + H(+). Its pathway is cell wall biogenesis; peptidoglycan biosynthesis. In terms of biological role, cell wall formation. This is D-alanine--D-alanine ligase from Geobacter sulfurreducens (strain ATCC 51573 / DSM 12127 / PCA).